The sequence spans 153 residues: MVILKGIPSVLTPELLYVLAQMGHGDELVLADANFPTSSVCKCGPVEIRADGVRIPELLKAILKLFPLDTYDESAAVMDLVPSDLLKGLKVPIWDQYSELLKQAGSDGNMKPVERFAFYERAKKAFAVVATGETALYGNLIIKKGVIPPEEQC.

Catalysis depends on histidine 24, which acts as the Proton donor. Aspartate 32 contributes to the substrate binding site. The active site involves aspartate 69. Residues methionine 78, tyrosine 119, tyrosine 137, and asparagine 139 each coordinate substrate. The active site involves tyrosine 119.

It belongs to the RbsD / FucU family.

The enzyme catalyses alpha-L-fucose = beta-L-fucose. Involved in the interconversion between alpha- and beta-L-fucoses. The chain is Fucose mutarotase (fuom) from Danio rerio (Zebrafish).